The chain runs to 379 residues: NADH-quinone oxidoreductase subunit D 1 (379 aa).

Belongs to the complex I 49 kDa subunit family. As to quaternary structure, NDH-1 is composed of 14 different subunits. Subunits NuoB, C, D, E, F, and G constitute the peripheral sector of the complex.

The protein resides in the cell inner membrane. The catalysed reaction is a quinone + NADH + 5 H(+)(in) = a quinol + NAD(+) + 4 H(+)(out). In terms of biological role, NDH-1 shuttles electrons from NADH, via FMN and iron-sulfur (Fe-S) centers, to quinones in the respiratory chain. The immediate electron acceptor for the enzyme in this species is believed to be ubiquinone. Couples the redox reaction to proton translocation (for every two electrons transferred, four hydrogen ions are translocated across the cytoplasmic membrane), and thus conserves the redox energy in a proton gradient. This Anaeromyxobacter sp. (strain K) protein is NADH-quinone oxidoreductase subunit D 1.